The primary structure comprises 321 residues: Glycerol-3-phosphate phosphatase (321 aa).

Aspartate 34 functions as the Nucleophile in the catalytic mechanism. The Mg(2+) site is built by aspartate 34, aspartate 36, and aspartate 260. Aspartate 36 (proton donor) is an active-site residue.

The protein belongs to the HAD-like hydrolase superfamily. CbbY/CbbZ/Gph/YieH family. As to quaternary structure, homodimer. Mg(2+) serves as cofactor. As to expression, expression was confirmed in liver, adipose tissue, testis and pancreatic islet.

It carries out the reaction O-phospho-L-tyrosyl-[protein] + H2O = L-tyrosyl-[protein] + phosphate. The catalysed reaction is sn-glycerol 1-phosphate + H2O = glycerol + phosphate. The enzyme catalyses sn-glycerol 3-phosphate + H2O = glycerol + phosphate. Glycerol-3-phosphate phosphatase hydrolyzing glycerol-3-phosphate into glycerol. Thereby, regulates the cellular levels of glycerol-3-phosphate a metabolic intermediate of glucose, lipid and energy metabolism. Was also shown to have a 2-phosphoglycolate phosphatase activity and a tyrosine-protein phosphatase activity. However, their physiological relevance is unclear. In vitro, also has a phosphatase activity toward ADP, ATP, GDP and GTP. In Rattus norvegicus (Rat), this protein is Glycerol-3-phosphate phosphatase.